We begin with the raw amino-acid sequence, 199 residues long: MADVPSMDALVALLRRLPGIGPRSAQRISYELLVRKRDLMPQLAAAFQQAHAVVRFCERCNNLSEAPLCAVCRSEHRDRSILCVVESPADLRAIEDTGVFVGEFFVLMGHLSPLDGIGPEALHIDRLSARLGETDLQEVIFATNPTLEGEATAQFLAGLVPDGVTISRIARGVPVGGELEYVDRSTLGRALHGRRLLDE.

The C4-type zinc-finger motif lies at 57–72; that stretch reads CERCNNLSEAPLCAVC. The Toprim domain maps to 80–174; that stretch reads SILCVVESPA…TISRIARGVP (95 aa).

The protein belongs to the RecR family.

Functionally, may play a role in DNA repair. It seems to be involved in an RecBC-independent recombinational process of DNA repair. It may act with RecF and RecO. The polypeptide is Recombination protein RecR (Acidithiobacillus ferrooxidans (strain ATCC 23270 / DSM 14882 / CIP 104768 / NCIMB 8455) (Ferrobacillus ferrooxidans (strain ATCC 23270))).